We begin with the raw amino-acid sequence, 102 residues long: Large ribosomal subunit protein uL24 (102 aa).

Belongs to the universal ribosomal protein uL24 family. As to quaternary structure, part of the 50S ribosomal subunit.

Functionally, one of two assembly initiator proteins, it binds directly to the 5'-end of the 23S rRNA, where it nucleates assembly of the 50S subunit. Its function is as follows. One of the proteins that surrounds the polypeptide exit tunnel on the outside of the subunit. The polypeptide is Large ribosomal subunit protein uL24 (Ralstonia nicotianae (strain ATCC BAA-1114 / GMI1000) (Ralstonia solanacearum)).